A 501-amino-acid chain; its full sequence is GDP-fucose protein O-fucosyltransferase 4 (501 aa).

Topologically, residues 1–10 (MLLQMAGRGK) are cytoplasmic. Residues 11–31 (MVPCVCLGLLGVLCWVWVSFA) traverse the membrane as a helical; Signal-anchor for type II membrane protein segment. At 32–501 (SFPDEQLSLG…MAVRRARGKN (470 aa)) the chain is on the lumenal side. Residue N173 is glycosylated (N-linked (GlcNAc...) asparagine). A disulfide bridge links C396 with C399. N-linked (GlcNAc...) asparagine glycosylation is found at N428 and N478.

The protein belongs to the glycosyltransferase 10 family.

It is found in the endoplasmic reticulum membrane. It carries out the reaction L-threonyl-[protein] + GDP-beta-L-fucose = 3-O-(alpha-L-fucosyl)-L-threonyl-[protein] + GDP + H(+). It catalyses the reaction L-seryl-[protein] + GDP-beta-L-fucose = 3-O-(alpha-L-fucosyl)-L-seryl-[protein] + GDP + H(+). It functions in the pathway protein modification; protein glycosylation. Protein O-fucosyltransferase that specifically catalyzes O-fucosylation of serine or threonine residues in EMI domains of target proteins. Attaches fucose through an O-glycosidic linkage. O-fucosylation of EMI domain-containing proteins may be required for facilitating protein folding and secretion. The sequence is that of GDP-fucose protein O-fucosyltransferase 4 (fut11) from Takifugu rubripes (Japanese pufferfish).